Here is a 63-residue protein sequence, read N- to C-terminus: Large ribosomal subunit protein bL28 (63 aa).

The protein belongs to the bacterial ribosomal protein bL28 family.

The polypeptide is Large ribosomal subunit protein bL28 (Mycoplasmopsis synoviae (strain 53) (Mycoplasma synoviae)).